A 271-amino-acid polypeptide reads, in one-letter code: Probable L,D-transpeptidase 3 (271 aa).

The region spanning 127–270 (VVGVASISQH…VDIGDPVIVQ (144 aa)) is the L,D-TPase catalytic domain. The active-site Proton donor/acceptor is His228. Catalysis depends on Cys246, which acts as the Nucleophile.

It functions in the pathway cell wall biogenesis; peptidoglycan biosynthesis. With respect to regulation, is irreversibly inactivated by the beta-lactam carbapenems via the formation of a covalent adduct resulting from acylation of the catalytic Cys. Imipenem is the most efficient drug for in vitro LdtMt3/Rv1433 inactivation. In terms of biological role, probable L,D-transpeptidase that may perform as-yet-unknown cross-linking reactions in M.tuberculosis. Is not able to generate 3-&gt;3 cross-links in peptidoglycan, using tetrapeptide stems as acyl donor substrates. May function in the anchoring of proteins to peptidoglycan. The protein is Probable L,D-transpeptidase 3 of Mycobacterium tuberculosis (strain ATCC 25618 / H37Rv).